Consider the following 1279-residue polypeptide: ATP-dependent helicase/nuclease subunit A (1279 aa).

One can recognise a UvrD-like helicase ATP-binding domain in the interval 4-499 (TKWTDEQRQA…VKLFKNFRSR (496 aa)). 25–32 (AGAGAGKT) is an ATP binding site. The region spanning 526–853 (EEALKVGASY…RIMSIHKSKG (328 aa)) is the UvrD-like helicase C-terminal domain.

This sequence belongs to the helicase family. AddA subfamily. Heterodimer of AddA and AddB/RexB. It depends on Mg(2+) as a cofactor.

It carries out the reaction Couples ATP hydrolysis with the unwinding of duplex DNA by translocating in the 3'-5' direction.. The enzyme catalyses ATP + H2O = ADP + phosphate + H(+). Functionally, the heterodimer acts as both an ATP-dependent DNA helicase and an ATP-dependent, dual-direction single-stranded exonuclease. Recognizes the chi site generating a DNA molecule suitable for the initiation of homologous recombination. The AddA nuclease domain is required for chi fragment generation; this subunit has the helicase and 3' -&gt; 5' nuclease activities. In Clostridium botulinum (strain Langeland / NCTC 10281 / Type F), this protein is ATP-dependent helicase/nuclease subunit A.